The primary structure comprises 1070 residues: TSC22 domain family protein 1 (1070 aa).

The segment at 1 to 98 is required for interaction with TGFBR1 and promotion of TGF-beta signaling; sequence MHQPPESTAA…SQAQLQAQPL (98 aa). Disordered regions lie at residues 1–110, 125–289, 458–487, 604–637, and 830–858; these read MHQP…KKSG, ISSN…PASV, VTSE…VGSG, YSQA…STQM, and TSQV…AQTP. A compositionally biased stretch (low complexity) spans 36 to 45; it reads GSASALNAAG. The segment covering 58 to 70 has biased composition (pro residues); it reads FPPPSLLQPPPPA. Low complexity predominate over residues 84-100; sequence SLNLLSQAQLQAQPLAP. A compositionally biased stretch (acidic residues) spans 133–142; the sequence is EDTESYDDLD. The segment covering 216 to 240 has biased composition (basic residues); that stretch reads HPHHLHHHHHIHHGHHLQHGHHHPS. A compositionally biased stretch (low complexity) spans 241-250; sequence HVAVASASIP. A compositionally biased stretch (polar residues) spans 261 to 271; sequence KLSTTGSSDSI. The residue at position 263 (serine 263) is a Phosphoserine. 2 stretches are compositionally biased toward low complexity: residues 272–289 and 465–478; these read TPVA…PASV and TSGS…STRS. Over residues 611-622 the composition is skewed to pro residues; that stretch reads VQTPLPGAPPPQ. Positions 830–845 are enriched in low complexity; the sequence is TSQVSSAGPSGMPSAP. Over residues 849–858 the composition is skewed to polar residues; it reads VPPQNIAQTP. The tract at residues 1003–1024 is leucine-zipper; it reads LKEQIKELIEKNSQLEQENNLL. The disordered stretch occupies residues 1034–1070; that stretch reads AQFQAQLQTGSPPATTQPQGTTQPPAQPASQGSGPTA. Residues 1041–1070 show a composition bias toward low complexity; sequence QTGSPPATTQPQGTTQPPAQPASQGSGPTA.

It belongs to the TSC-22/Dip/Bun family. As to quaternary structure, forms homodimers. Forms heterodimers. Component of a complex composed of TSC22D1 (via N-terminus), TGFBR1 and TGFBR2; the interaction between TSC22D1 and TGFBR1 is inhibited by SMAD7 and promoted by TGFB1. Interacts with SMAD7; the interaction requires TGF-beta and the interaction is inhibited by TGFBR1. Interacts with TPT1/fortilin; interaction results in the destabilization of TSC22D1 protein and prevents TSC22D1-mediated apoptosis. Interacts with SMAD4 (via N-terminus). Interacts with ACVRL1/ALK1, ACVR1/ALK2, BMPR1A/ALK3, ACVR1B/ALK4, BMPR1B/ALK6, ACVR2A/ACTRII, and BMPR2. Interacts with SMAD6. Interacts with TFE3; the interaction is enhanced in the presence of TGF-beta. In terms of assembly, forms a heterodimer with TSC22D4/THG1. Forms a heterodimer with TSC22D4/THG1. Interacts with histone H1-2. Interacts with GNL3.

The protein resides in the cytoplasm. The protein localises to the nucleus. Its subcellular location is the cell membrane. It is found in the mitochondrion. In terms of biological role, transcriptional repressor. Acts on the C-type natriuretic peptide (CNP) promoter. Acts to promote CASP3-mediated apoptosis. Positively regulates TGF-beta signaling by interacting with SMAD7 which inhibits binding of SMAD7 to TGFBR1, preventing recruitment of SMURF ubiquitin ligases to TGFBR1 and inhibiting SMURF-mediated ubiquitination and degradation of TGFBR1. Contributes to enhancement of TGF-beta signaling by binding to and modulating the transcription activator activity of SMAD4. Promotes TGF-beta-induced transcription of COL1A2; via its interaction with TFE3 at E-boxes in the gene proximal promoter. Plays a role in the repression of hematopoietic precursor cell growth. Promotes IL2 deprivation-induced apoptosis in T-lymphocytes, via repression of TSC22D3/GILZ transcription and activation of the caspase cascade. Functionally, may act to negatively regulate TGFB3 signaling and thereby inhibit cell death in mammary gland cells. Its function is as follows. Positively regulates cell death in response to TGFB3 during mammary gland involution. The protein is TSC22 domain family protein 1 of Pongo abelii (Sumatran orangutan).